Here is a 331-residue protein sequence, read N- to C-terminus: Ketol-acid reductoisomerase (NADP(+)) (331 aa).

In terms of domain architecture, KARI N-terminal Rossmann spans 2–182 (AQLFYDSDAD…GGTRAGILET (181 aa)). Residues 25 to 28 (YGSQ), S51, S53, and 83 to 86 (DEFQ) each bind NADP(+). H108 is an active-site residue. G134 provides a ligand contact to NADP(+). The 146-residue stretch at 183-328 (NFKEETETDL…KGLRAMFSWL (146 aa)) folds into the KARI C-terminal knotted domain. Mg(2+) contacts are provided by D191, E195, E227, and E231. S252 is a binding site for substrate.

It belongs to the ketol-acid reductoisomerase family. Mg(2+) is required as a cofactor.

The catalysed reaction is (2R)-2,3-dihydroxy-3-methylbutanoate + NADP(+) = (2S)-2-acetolactate + NADPH + H(+). The enzyme catalyses (2R,3R)-2,3-dihydroxy-3-methylpentanoate + NADP(+) = (S)-2-ethyl-2-hydroxy-3-oxobutanoate + NADPH + H(+). It functions in the pathway amino-acid biosynthesis; L-isoleucine biosynthesis; L-isoleucine from 2-oxobutanoate: step 2/4. It participates in amino-acid biosynthesis; L-valine biosynthesis; L-valine from pyruvate: step 2/4. Functionally, involved in the biosynthesis of branched-chain amino acids (BCAA). Catalyzes an alkyl-migration followed by a ketol-acid reduction of (S)-2-acetolactate (S2AL) to yield (R)-2,3-dihydroxy-isovalerate. In the isomerase reaction, S2AL is rearranged via a Mg-dependent methyl migration to produce 3-hydroxy-3-methyl-2-ketobutyrate (HMKB). In the reductase reaction, this 2-ketoacid undergoes a metal-dependent reduction by NADPH to yield (R)-2,3-dihydroxy-isovalerate. The sequence is that of Ketol-acid reductoisomerase (NADP(+)) from Prochlorococcus marinus (strain MIT 9303).